Reading from the N-terminus, the 112-residue chain is Probable head completion protein 2 (112 aa).

Belongs to the skunalikevirus head completion protein 2 family.

It is found in the virion. Its function is as follows. Probably functions as a stopper that is part of the head-tail connector and that locks the viral DNA in the capsid. During assembly, functions as a docking platform which the preassembled tail can bind to. Plays a role in morphogenesis of the virion capsid after genome packaging. This chain is Probable head completion protein 2, found in Lactococcus phage p2 (Lactococcus lactis bacteriophage p2).